The sequence spans 366 residues: Cyanide hydratase (366 aa).

The CN hydrolase domain maps to 6 to 285 (YKAAAVTSEP…DGLMFVDIDL (280 aa)). Catalysis depends on E46, which acts as the Proton acceptor. K128 is an active-site residue. C163 serves as the catalytic Nucleophile.

Belongs to the carbon-nitrogen hydrolase superfamily. Nitrilase family. Oligomer of dimers, forming left-handed helical fibers.

The enzyme catalyses formamide = hydrogen cyanide + H2O. Its function is as follows. Catalyzes the hydration of cyanide to formamide. Degradation of cyanide may be important for plant pathogenic fungi in infection of cyanogenic plants. Can also transform some nitriles like 2-cyanopyridine and fumaronitrile. The sequence is that of Cyanide hydratase from Pyrenophora teres f. teres (strain 0-1) (Barley net blotch fungus).